The chain runs to 363 residues: Neutral protease 2 homolog NFIA_102630 (363 aa).

The first 19 residues, 1 to 19 (MKVTVLASAILALINGALA), serve as a signal peptide directing secretion. Positions 20 to 172 (LPANAPTLDV…PQAIKLLDRR (153 aa)) are excised as a propeptide. 2 cysteine pairs are disulfide-bonded: C178/C250 and C257/C275. H300 provides a ligand contact to Zn(2+). E301 is a catalytic residue. Residues H304 and D315 each coordinate Zn(2+).

The protein belongs to the peptidase M35 family. Requires Zn(2+) as cofactor.

It is found in the secreted. The enzyme catalyses Preferential cleavage of bonds with hydrophobic residues in P1'. Also 3-Asn-|-Gln-4 and 8-Gly-|-Ser-9 bonds in insulin B chain.. Secreted metalloproteinase that allows assimilation of proteinaceous substrates. Shows high activities on basic nuclear substrates such as histone and protamine. The protein is Neutral protease 2 homolog NFIA_102630 of Neosartorya fischeri (strain ATCC 1020 / DSM 3700 / CBS 544.65 / FGSC A1164 / JCM 1740 / NRRL 181 / WB 181) (Aspergillus fischerianus).